Consider the following 668-residue polypeptide: Protein-glutamine gamma-glutamyltransferase (668 aa).

At 1–6 (MNAIPR) the chain is on the cytoplasmic side. The helical transmembrane segment at 7 to 27 (VALVWLLVAQVLVILPHLAYM) threads the bilayer. Topologically, residues 28-50 (PLWIAAMWLGCAAWRVQVFRMRA) are periplasmic. Residues 51-71 (GYPRAWVKLALALLAGAGVWL) form a helical membrane-spanning segment. Over 72–74 (SRG) the chain is Cytoplasmic. Residues 75 to 95 (SLVGLDAGAVLLIAAFILKLV) form a helical membrane-spanning segment. The Periplasmic portion of the chain corresponds to 96–103 (EMKTRRDA). Helical transmembrane passes span 104–124 (LVLV…DDGF) and 125–145 (LAAL…IGLQ). The Cytoplasmic portion of the chain corresponds to 146–158 (QSAFASRPWPTLR). Residues 159 to 179 (LAGGLLLQALPLMLLLFLFFP) form a helical membrane-spanning segment. Over 180–548 (RLGPLWSLPM…FGGLDPTRLG (369 aa)) the chain is Periplasmic. Cys404 functions as the Nucleophile in the catalytic mechanism. Active-site residues include His448 and Asp464. A helical transmembrane segment spans residues 549–569 (LLLGAAAILSVGLLALFLLKP). Topologically, residues 570-668 (WQGRGDLRSR…TRDGRGEEQA (99 aa)) are cytoplasmic.

The protein belongs to the transglutaminase-like superfamily.

It is found in the cell inner membrane. The enzyme catalyses L-glutaminyl-[protein] + L-lysyl-[protein] = [protein]-L-lysyl-N(6)-5-L-glutamyl-[protein] + NH4(+). Its function is as follows. Displays transglutaminase activity (TGase) in vitro. Plays a critical role in the viability of P.aeruginosa. Might contribute to an essential function linked to the cell wall. The protein is Protein-glutamine gamma-glutamyltransferase (tgpA) of Pseudomonas aeruginosa (strain ATCC 15692 / DSM 22644 / CIP 104116 / JCM 14847 / LMG 12228 / 1C / PRS 101 / PAO1).